The primary structure comprises 439 residues: O-methyltransferase aurJ (439 aa).

D283 serves as a coordination point for S-adenosyl-L-methionine. H338 acts as the Proton acceptor in catalysis.

Belongs to the class I-like SAM-binding methyltransferase superfamily. Cation-independent O-methyltransferase family. COMT subfamily.

It catalyses the reaction norrubrofusarin + S-adenosyl-L-methionine = rubrofusarin + S-adenosyl-L-homocysteine + H(+). It participates in pigment biosynthesis. Its function is as follows. O-methyltransferase; part of the gene cluster that mediates the biosynthesis of aurofusarin, a red mycelium pigment which is acting as a mycotoxin. The first step is performed by the polyketide synthase which condenses one acetyl-CoA and 6 malonyl-CoA units to form the first intermediate, the cyclic heptaketide and yellow pigment YWA1. The C2 hydroxyl group in the pyrone ring of YWA1 is probably formed during ring closure by an aldol-type cyclization reaction. The dehydratase aurZ then acts as the first tailoring enzyme in the aurofusarin biosynthetic pathway by converting YWA1 to nor-rubrofusarin. Nor-rubrofusarin is then methylated to rubrofusarin by the O-methyltransferase aurJ. Rubrofusarin is then transported across the plasma membrane by the rubrofusarin-specific pump aurT for further enzymatic processing by the extracellular complex composed of GIP1, aurF, aurO and aurS to yield aurofusarin. In Gibberella zeae (strain ATCC MYA-4620 / CBS 123657 / FGSC 9075 / NRRL 31084 / PH-1) (Wheat head blight fungus), this protein is O-methyltransferase aurJ.